A 418-amino-acid polypeptide reads, in one-letter code: Serum response factor homolog A (418 aa).

Disordered regions lie at residues 14-67 (LGNV…GKKA), 144-170 (CLNT…LLQQ), 301-351 (RLGK…NNNS), and 388-418 (SSSS…FPPC). Composition is skewed to low complexity over residues 22-39 (PSSP…PTST) and 51-61 (TSEPSSPSTGE). The MADS-box domain occupies 67-127 (AGRRKIKIEF…GHVYTFATAK (61 aa)). Composition is skewed to low complexity over residues 150 to 170 (NPNS…LLQQ), 306 to 351 (NNNN…NNNS), and 388 to 399 (SSSSASSSPASP). Over residues 400–418 (NQFNYSNHSMPLNNQFPPC) the composition is skewed to polar residues.

It is found in the nucleus. Its function is as follows. Required for proper slug migration, spore differentiation and stalk differentiation (under nonbuffered conditions). Could be involved in late events of spore maturation necessary for spore stability. This chain is Serum response factor homolog A (srfA), found in Dictyostelium discoideum (Social amoeba).